The following is a 278-amino-acid chain: Cation-dependent mannose-6-phosphate receptor (278 aa).

A signal peptide spans 1-21 (MFPFSGCWRTELLLLLLLAVA). Topologically, residues 22–186 (VRESWQIEEK…SLACSPEVSH (165 aa)) are lumenal. The region spanning 31-182 (KSCDLVGEKD…EMDSSLACSP (152 aa)) is the MRH domain. A disulfide bond links cysteine 33 and cysteine 79. 5 N-linked (GlcNAc...) asparagine glycosylation sites follow: asparagine 58, asparagine 84, asparagine 95, asparagine 108, and asparagine 114. Intrachain disulfides connect cysteine 133–cysteine 168 and cysteine 146–cysteine 180. A helical transmembrane segment spans residues 187 to 211 (LSVGSILLVIFASLVAVYIIGGFLY). Topologically, residues 212–278 (QRLVVGAKGM…EERDDHLLPM (67 aa)) are cytoplasmic. The tract at residues 257-278 (RGVGDDQLGEESEERDDHLLPM) is disordered. Serine 268 is modified (phosphoserine).

As to quaternary structure, homodimer. Binds GGA1, GGA2 and GGA3.

It localises to the lysosome membrane. Functionally, transport of phosphorylated lysosomal enzymes from the Golgi complex and the cell surface to lysosomes. Lysosomal enzymes bearing phosphomannosyl residues bind specifically to mannose-6-phosphate receptors in the Golgi apparatus and the resulting receptor-ligand complex is transported to an acidic prelyosomal compartment where the low pH mediates the dissociation of the complex. This chain is Cation-dependent mannose-6-phosphate receptor (M6pr), found in Mus musculus (Mouse).